A 791-amino-acid polypeptide reads, in one-letter code: Centrosomal protein of 89 kDa (791 aa).

Residues 27 to 203 (APKPAVPRTP…HTQQKDVKHS (177 aa)) are disordered. Residues 30–45 (PAVPRTPPPRSPNPSP) are compositionally biased toward pro residues. Ser50 bears the Phosphoserine mark. Positions 50–62 (SALAAAILATTLT) are enriched in low complexity. Residues 75 to 89 (SRSESDASDIEKDSF) show a composition bias toward basic and acidic residues. The segment covering 94-107 (ATTSELRLRQSWQN) has biased composition (polar residues). Residues 137–161 (RESESTWKDVGDGRDATYTVPHRDQ) are compositionally biased toward basic and acidic residues. The span at 181–190 (SDSSSSSSSS) shows a compositional bias: low complexity. Coiled coils occupy residues 252–291 (SANQ…TEKA), 370–598 (LLAY…MGKE), and 670–737 (HRLK…SLLQ).

It is found in the cytoplasm. The protein localises to the cytosol. It localises to the cytoskeleton. Its subcellular location is the microtubule organizing center. The protein resides in the centrosome. It is found in the spindle pole. The protein localises to the centriole. It localises to the mitochondrion intermembrane space. Functionally, required for ciliogenesis. Also plays a role in mitochondrial metabolism where it may modulate complex IV activity. The protein is Centrosomal protein of 89 kDa (Cep89) of Mus musculus (Mouse).